We begin with the raw amino-acid sequence, 35 residues long: Peptide Hact-3 (35 aa).

In terms of tissue distribution, expressed in tentacles.

Its subcellular location is the nematocyst. It is found in the secreted. Functionally, peptide with unknown function. Does not exhibit antimicrobial activity against Escherichia coli and Staphylococcus aureus. This is Peptide Hact-3 from Heliofungia actiniformis (Mushroom coral).